A 55-amino-acid polypeptide reads, in one-letter code: Large ribosomal subunit protein uL30 (55 aa).

The protein belongs to the universal ribosomal protein uL30 family. As to quaternary structure, part of the 50S ribosomal subunit.

Functionally, binds the 5S and 23S rRNAs. This chain is Large ribosomal subunit protein uL30, found in Deinococcus radiodurans (strain ATCC 13939 / DSM 20539 / JCM 16871 / CCUG 27074 / LMG 4051 / NBRC 15346 / NCIMB 9279 / VKM B-1422 / R1).